Consider the following 167-residue polypeptide: NADH-ubiquinone oxidoreductase chain 6 (167 aa).

Helical transmembrane passes span Met-1–Asn-21, Ser-23–Met-43, Met-47–Ala-67, Val-86–Gly-106, and Ala-133–Leu-153.

It belongs to the complex I subunit 6 family.

Its subcellular location is the mitochondrion membrane. The catalysed reaction is a ubiquinone + NADH + 5 H(+)(in) = a ubiquinol + NAD(+) + 4 H(+)(out). Core subunit of the mitochondrial membrane respiratory chain NADH dehydrogenase (Complex I) that is believed to belong to the minimal assembly required for catalysis. Complex I functions in the transfer of electrons from NADH to the respiratory chain. The immediate electron acceptor for the enzyme is believed to be ubiquinone. This Polypterus ornatipinnis (Ornate bichir) protein is NADH-ubiquinone oxidoreductase chain 6 (MT-ND6).